Here is a 171-residue protein sequence, read N- to C-terminus: Synaptonemal complex central element protein 2 (171 aa).

Residues 1–52 form a disordered region; sequence MERHGVAAPPVELKDQEPPAIVESGEHRQSENHEETPGSVAPSASCQLPGPF. Basic and acidic residues predominate over residues 24 to 36; the sequence is SGEHRQSENHEET. 2 coiled-coil regions span residues 52–83 and 118–146; these read FSSL…DHAL and QERL…QTVE.

Belongs to the SYCE family. Homodimer. Found in a complex with SYCP1 and SYCE1. Interacts with SYCP1 and SYCE1. Interacts with SYCE3. Interacts with TEX12. As to expression, meiotic cells (at protein level). Expressed in the ovary and testis.

It is found in the nucleus. Its subcellular location is the chromosome. Its function is as follows. Major component of the transverse central element of synaptonemal complexes (SCS), formed between homologous chromosomes during meiotic prophase. Requires SYCP1 in order to be incorporated into the central element. May have a role in the synaptonemal complex assembly, stabilization and recombination. The sequence is that of Synaptonemal complex central element protein 2 (Syce2) from Mus musculus (Mouse).